We begin with the raw amino-acid sequence, 453 residues long: Nuclear distribution protein PAC1-2 (453 aa).

The LisH domain occupies 9 to 41 (QADELHKSIVAYLTANNLSTTAATLREELSLGE). Positions 63-87 (VVRLQKKVMDLESRSVALQSELEHS) form a coiled coil. The segment at 84–108 (LEHSTPASLSKRKDPTSWLPRSPPR) is disordered. 7 WD repeats span residues 113-154 (SHQA…RTLK), 156-196 (HTRA…KNTR), 200-243 (GHDH…CIKT), 246-285 (GHTGWVRDVVPSLDGRFLLSSGTDQTARLWDISAADPESK), 290-350 (GHEN…IKTL), 352-391 (GHDNWVSGLVFHPGGKYLLSVADDKTLRCWDLGDDGRCVK), and 396-448 (AHGQ…DKVV).

Belongs to the WD repeat LIS1/nudF family. As to quaternary structure, self-associates. Interacts with NDL1 and dynein.

The protein resides in the cytoplasm. It localises to the cytoskeleton. The protein localises to the spindle pole. Functionally, positively regulates the activity of the minus-end directed microtubule motor protein dynein. May enhance dynein-mediated microtubule sliding by targeting dynein to the microtubule plus end. Required for nuclear migration during vegetative growth as well as development. Required for retrograde early endosome (EE) transport from the hyphal tip. Required for localization of dynein to the mitotic spindle poles. Recruits additional proteins to the dynein complex at SPBs. The sequence is that of Nuclear distribution protein PAC1-2 from Chaetomium globosum (strain ATCC 6205 / CBS 148.51 / DSM 1962 / NBRC 6347 / NRRL 1970) (Soil fungus).